The primary structure comprises 332 residues: 5-dehydro-2-deoxygluconokinase (332 aa).

This sequence belongs to the carbohydrate kinase PfkB family.

The catalysed reaction is 5-dehydro-2-deoxy-D-gluconate + ATP = 6-phospho-5-dehydro-2-deoxy-D-gluconate + ADP + H(+). It functions in the pathway polyol metabolism; myo-inositol degradation into acetyl-CoA; acetyl-CoA from myo-inositol: step 5/7. In terms of biological role, catalyzes the phosphorylation of 5-dehydro-2-deoxy-D-gluconate (2-deoxy-5-keto-D-gluconate or DKG) to 6-phospho-5-dehydro-2-deoxy-D-gluconate (DKGP). The sequence is that of 5-dehydro-2-deoxygluconokinase from Bacillus anthracis (strain A0248).